Reading from the N-terminus, the 202-residue chain is ATP-dependent Clp protease proteolytic subunit (202 aa).

The Nucleophile role is filled by S106. Residue H131 is part of the active site.

It belongs to the peptidase S14 family. In terms of assembly, fourteen ClpP subunits assemble into 2 heptameric rings which stack back to back to give a disk-like structure with a central cavity, resembling the structure of eukaryotic proteasomes.

It is found in the cytoplasm. It catalyses the reaction Hydrolysis of proteins to small peptides in the presence of ATP and magnesium. alpha-casein is the usual test substrate. In the absence of ATP, only oligopeptides shorter than five residues are hydrolyzed (such as succinyl-Leu-Tyr-|-NHMec, and Leu-Tyr-Leu-|-Tyr-Trp, in which cleavage of the -Tyr-|-Leu- and -Tyr-|-Trp bonds also occurs).. Cleaves peptides in various proteins in a process that requires ATP hydrolysis. Has a chymotrypsin-like activity. Plays a major role in the degradation of misfolded proteins. The sequence is that of ATP-dependent Clp protease proteolytic subunit from Acidovorax ebreus (strain TPSY) (Diaphorobacter sp. (strain TPSY)).